Reading from the N-terminus, the 497-residue chain is Probable cytosol aminopeptidase (497 aa).

Residues Lys-263 and Asp-268 each coordinate Mn(2+). Lys-275 is a catalytic residue. Residues Asp-286, Asp-345, and Glu-347 each contribute to the Mn(2+) site. Arg-349 is a catalytic residue.

The protein belongs to the peptidase M17 family. The cofactor is Mn(2+).

The protein localises to the cytoplasm. The catalysed reaction is Release of an N-terminal amino acid, Xaa-|-Yaa-, in which Xaa is preferably Leu, but may be other amino acids including Pro although not Arg or Lys, and Yaa may be Pro. Amino acid amides and methyl esters are also readily hydrolyzed, but rates on arylamides are exceedingly low.. The enzyme catalyses Release of an N-terminal amino acid, preferentially leucine, but not glutamic or aspartic acids.. In terms of biological role, presumably involved in the processing and regular turnover of intracellular proteins. Catalyzes the removal of unsubstituted N-terminal amino acids from various peptides. The polypeptide is Probable cytosol aminopeptidase (Methylorubrum extorquens (strain CM4 / NCIMB 13688) (Methylobacterium extorquens)).